Reading from the N-terminus, the 133-residue chain is Ribosome-binding factor A (133 aa).

Belongs to the RbfA family. As to quaternary structure, monomer. Binds 30S ribosomal subunits, but not 50S ribosomal subunits or 70S ribosomes.

It is found in the cytoplasm. Its function is as follows. One of several proteins that assist in the late maturation steps of the functional core of the 30S ribosomal subunit. Associates with free 30S ribosomal subunits (but not with 30S subunits that are part of 70S ribosomes or polysomes). Required for efficient processing of 16S rRNA. May interact with the 5'-terminal helix region of 16S rRNA. The protein is Ribosome-binding factor A of Salmonella heidelberg (strain SL476).